The sequence spans 284 residues: NAD kinase (284 aa).

The active-site Proton acceptor is the aspartate 70. Residues aspartate 70–glycine 71, asparagine 139–glutamate 140, lysine 167, aspartate 169, leucine 177, threonine 180–serine 185, and glutamine 236 contribute to the NAD(+) site.

Belongs to the NAD kinase family. A divalent metal cation serves as cofactor.

Its subcellular location is the cytoplasm. The enzyme catalyses NAD(+) + ATP = ADP + NADP(+) + H(+). Involved in the regulation of the intracellular balance of NAD and NADP, and is a key enzyme in the biosynthesis of NADP. Catalyzes specifically the phosphorylation on 2'-hydroxyl of the adenosine moiety of NAD to yield NADP. The protein is NAD kinase of Helicobacter pylori (strain Shi470).